We begin with the raw amino-acid sequence, 275 residues long: NH(3)-dependent NAD(+) synthetase (275 aa).

Position 46–53 (46–53 (GISGGQDS)) interacts with ATP. D52 is a binding site for Mg(2+). R140 contacts deamido-NAD(+). T160 contributes to the ATP binding site. E165 lines the Mg(2+) pocket. K173 and D180 together coordinate deamido-NAD(+). Residues K189 and T211 each contribute to the ATP site. Deamido-NAD(+) is bound at residue 260–261 (HK).

Belongs to the NAD synthetase family. In terms of assembly, homodimer.

It carries out the reaction deamido-NAD(+) + NH4(+) + ATP = AMP + diphosphate + NAD(+) + H(+). Its pathway is cofactor biosynthesis; NAD(+) biosynthesis; NAD(+) from deamido-NAD(+) (ammonia route): step 1/1. In terms of biological role, catalyzes the ATP-dependent amidation of deamido-NAD to form NAD. Uses ammonia as a nitrogen source. In Escherichia coli O127:H6 (strain E2348/69 / EPEC), this protein is NH(3)-dependent NAD(+) synthetase.